We begin with the raw amino-acid sequence, 209 residues long: Large ribosomal subunit protein bL21m (209 aa).

The N-terminal 43 residues, 1-43 (MAAAIAASALPGAFGRLVSVCSRSILASQGSGSASLWSASRRF), are a transit peptide targeting the mitochondrion.

Belongs to the bacterial ribosomal protein bL21 family. In terms of assembly, component of the mitochondrial ribosome large subunit (39S) which comprises a 16S rRNA and about 50 distinct proteins.

It is found in the mitochondrion. This chain is Large ribosomal subunit protein bL21m (Mrpl21), found in Mus musculus (Mouse).